A 311-amino-acid polypeptide reads, in one-letter code: Aspartate carbamoyltransferase catalytic subunit (311 aa).

The carbamoyl phosphate site is built by Arg55 and Thr56. Lys85 contributes to the L-aspartate binding site. Arg106, His135, and Gln138 together coordinate carbamoyl phosphate. Residues Arg168 and Arg230 each coordinate L-aspartate. Carbamoyl phosphate is bound by residues Leu268 and Pro269.

Belongs to the aspartate/ornithine carbamoyltransferase superfamily. ATCase family. In terms of assembly, heterododecamer (2C3:3R2) of six catalytic PyrB chains organized as two trimers (C3), and six regulatory PyrI chains organized as three dimers (R2).

It catalyses the reaction carbamoyl phosphate + L-aspartate = N-carbamoyl-L-aspartate + phosphate + H(+). Its pathway is pyrimidine metabolism; UMP biosynthesis via de novo pathway; (S)-dihydroorotate from bicarbonate: step 2/3. Catalyzes the condensation of carbamoyl phosphate and aspartate to form carbamoyl aspartate and inorganic phosphate, the committed step in the de novo pyrimidine nucleotide biosynthesis pathway. The chain is Aspartate carbamoyltransferase catalytic subunit from Salmonella paratyphi A (strain AKU_12601).